A 424-amino-acid chain; its full sequence is Chitinase CLP (424 aa).

An N-terminal signal peptide occupies residues 1–18 (MSLHLLLAVSLCVALASS). Residues 43 to 405 (AATSLYTVPI…DEEKQRLGFS (363 aa)) enclose the Peptidase A1 domain. Residues N139, N345, and N419 are each glycosylated (N-linked (GlcNAc...) asparagine).

It belongs to the peptidase A1 family. Expressed in roots. Expressed at low levels in leaf sheaths, stems and flowers.

It localises to the secreted. The protein resides in the extracellular space. The protein localises to the apoplast. The enzyme catalyses Random endo-hydrolysis of N-acetyl-beta-D-glucosaminide (1-&gt;4)-beta-linkages in chitin and chitodextrins.. Chitinase that possesses antifungal activity. Inhibits the growth of the fungal pathogen Rhizoctonia solani by degrading the fungal cell wall. Does not possess inhibiting activity against fungal endo-1,4-beta-D-xylanases belonging to glycoside hydrolase family 10 (GH10) and family 11 (GH11). Involved in the regulation of plant growth by regulating the intracellular calcium ion concentration in roots. This Oryza sativa subsp. japonica (Rice) protein is Chitinase CLP.